The following is a 788-amino-acid chain: Choline transporter-like protein 1 (788 aa).

The helical transmembrane segment at 98–118 (FLFFVFLCGWVVVASLGIMWG) threads the bilayer. Asparagine 276 carries an N-linked (GlcNAc...) asparagine glycan. 4 helical membrane passes run 329 to 349 (WWQT…WTVI), 352 to 372 (LLGS…LGFG), 409 to 429 (FVVA…ILFI), and 458 to 478 (LFPF…AIWL). N-linked (GlcNAc...) asparagine glycosylation occurs at asparagine 497. The next 5 membrane-spanning stretches (helical) occupy residues 531 to 551 (LFAF…ALAG), 583 to 603 (LGSI…RVML), 620 to 640 (WFLM…KFLT), 679 to 699 (AGIL…ILSF), and 718 to 738 (YYFV…DLFF).

This sequence belongs to the CTL (choline transporter-like) family.

The protein localises to the membrane. The protein is Choline transporter-like protein 1 (chtl-1) of Caenorhabditis briggsae.